The chain runs to 363 residues: NADH-quinone oxidoreductase subunit H (363 aa).

10 helical membrane-spanning segments follow: residues 29 to 49 (VLKI…YVVW), 62 to 82 (GPMY…KLLF), 94 to 114 (AIFV…WAVV), 127 to 147 (VGLL…ILAG), 166 to 186 (VVSY…AAGS), 202 to 222 (FFDW…VSGV), 239 to 257 (IVAG…LFFL), 264 to 286 (ILVS…QGWV), 293 to 313 (LIDW…LFFA), and 339 to 359 (FIPL…SGVI).

It belongs to the complex I subunit 1 family. In terms of assembly, NDH-1 is composed of 14 different subunits. Subunits NuoA, H, J, K, L, M, N constitute the membrane sector of the complex.

It localises to the cell inner membrane. The catalysed reaction is a quinone + NADH + 5 H(+)(in) = a quinol + NAD(+) + 4 H(+)(out). NDH-1 shuttles electrons from NADH, via FMN and iron-sulfur (Fe-S) centers, to quinones in the respiratory chain. The immediate electron acceptor for the enzyme in this species is believed to be ubiquinone. Couples the redox reaction to proton translocation (for every two electrons transferred, four hydrogen ions are translocated across the cytoplasmic membrane), and thus conserves the redox energy in a proton gradient. This subunit may bind ubiquinone. The sequence is that of NADH-quinone oxidoreductase subunit H from Xylella fastidiosa (strain Temecula1 / ATCC 700964).